The sequence spans 473 residues: Cysteine--tRNA ligase (473 aa).

Cys30 provides a ligand contact to Zn(2+). Residues Met32–His42 carry the 'HIGH' region motif. Positions 213, 238, and 242 each coordinate Zn(2+). The 'KMSKS' region signature appears at Lys270–Ser274. Residue Lys273 participates in ATP binding.

Belongs to the class-I aminoacyl-tRNA synthetase family. As to quaternary structure, monomer. It depends on Zn(2+) as a cofactor.

It localises to the cytoplasm. The enzyme catalyses tRNA(Cys) + L-cysteine + ATP = L-cysteinyl-tRNA(Cys) + AMP + diphosphate. This Acinetobacter baylyi (strain ATCC 33305 / BD413 / ADP1) protein is Cysteine--tRNA ligase.